An 842-amino-acid chain; its full sequence is Protein translocase subunit SecA (842 aa).

ATP-binding positions include Q85, 103-107, and D493; that span reads GEGKT. Residues C825, C827, C836, and H837 each contribute to the Zn(2+) site.

This sequence belongs to the SecA family. As to quaternary structure, monomer and homodimer. Part of the essential Sec protein translocation apparatus which comprises SecA, SecYEG and auxiliary proteins SecDF. Other proteins may also be involved. The cofactor is Zn(2+).

It is found in the cell membrane. Its subcellular location is the cytoplasm. The catalysed reaction is ATP + H2O + cellular proteinSide 1 = ADP + phosphate + cellular proteinSide 2.. Part of the Sec protein translocase complex. Interacts with the SecYEG preprotein conducting channel. Has a central role in coupling the hydrolysis of ATP to the transfer of proteins into and across the cell membrane, serving as an ATP-driven molecular motor driving the stepwise translocation of polypeptide chains across the membrane. This Streptococcus equi subsp. equi (strain 4047) protein is Protein translocase subunit SecA.